The sequence spans 485 residues: Alpha-amylase (485 aa).

The N-terminal stretch at 1–18 is a signal peptide; the sequence is MFLTSVLILCSLAALSLG. Gln19 bears the Pyrrolidone carboxylic acid mark. A disulfide bond links Cys46 and Cys102. Ca(2+) is bound by residues Asn116, Arg164, and Asp173. Cys152 and Cys166 form a disulfide bridge. Residue Arg201 coordinates chloride. Asp203 serves as the catalytic Nucleophile. His207 contributes to the Ca(2+) binding site. The active-site Proton donor is the Glu240. 2 residues coordinate chloride: Asn303 and Arg339. Cys439 and Cys451 are joined by a disulfide. N-linked (GlcNAc...) asparagine glycosylation is present at Asn448.

This sequence belongs to the glycosyl hydrolase 13 family. In terms of assembly, monomer. Requires Ca(2+) as cofactor. Chloride serves as cofactor. Expressed in larval and adult gut.

Its subcellular location is the secreted. It carries out the reaction Endohydrolysis of (1-&gt;4)-alpha-D-glucosidic linkages in polysaccharides containing three or more (1-&gt;4)-alpha-linked D-glucose units.. The protein is Alpha-amylase of Phaedon cochleariae (Mustard beetle).